The primary structure comprises 282 residues: Endonuclease V (282 aa).

Residues aspartate 52 and aspartate 126 each contribute to the Mg(2+) site. The tract at residues 250-282 (SLGLPGPPTPRSPKAQRPVACPKGDSGESSALC) is disordered.

It belongs to the endonuclease V family. Monomer. Interacts with PABPC1; the interaction is RNA-dependent and stimulates ENDOV activity. Requires Mg(2+) as cofactor.

It is found in the cytoplasm. Its subcellular location is the nucleus. The protein localises to the nucleolus. The protein resides in the stress granule. With respect to regulation, inhibited by normal intracellular concentrations of ATP. Endoribonuclease that specifically cleaves inosine-containing RNAs: cleaves RNA at the second phosphodiester bond 3' to inosine. Active against both single-stranded and double-stranded RNAs. Has strong preference for single-stranded RNAs (ssRNAs) toward double-stranded RNAs (dsRNAs). Cleaves mRNAs and tRNAs containing inosine. Also able to cleave structure-specific dsRNA substrates containing the specific sites 5'-IIUI-3' and 5'-UIUU-3'. Inosine is present in a number of RNAs following editing; the function of inosine-specific endoribonuclease is still unclear: it could either play a regulatory role in edited RNAs, or be involved in antiviral response by removing the hyperedited long viral dsRNA genome that has undergone A-to-I editing. Binds branched DNA structures. Its function is as follows. Endoribonuclease that specifically cleaves inosine-containing RNAs: cleaves RNA at the second phosphodiester bond 3' to inosine. Active against both single-stranded and double-stranded RNAs. Cleaves tRNAs containing inosine. This Homo sapiens (Human) protein is Endonuclease V (ENDOV).